The primary structure comprises 122 residues: Holo-[acyl-carrier-protein] synthase (122 aa).

Mg(2+) contacts are provided by D8 and E56.

This sequence belongs to the P-Pant transferase superfamily. AcpS family. Mg(2+) is required as a cofactor.

It is found in the cytoplasm. The enzyme catalyses apo-[ACP] + CoA = holo-[ACP] + adenosine 3',5'-bisphosphate + H(+). Its function is as follows. Transfers the 4'-phosphopantetheine moiety from coenzyme A to a Ser of acyl-carrier-protein. This is Holo-[acyl-carrier-protein] synthase from Alkaliphilus metalliredigens (strain QYMF).